Reading from the N-terminus, the 383-residue chain is Putative glutamate--cysteine ligase 2-1 (383 aa).

This sequence belongs to the glutamate--cysteine ligase type 2 family. YbdK subfamily.

The enzyme catalyses L-cysteine + L-glutamate + ATP = gamma-L-glutamyl-L-cysteine + ADP + phosphate + H(+). ATP-dependent carboxylate-amine ligase which exhibits weak glutamate--cysteine ligase activity. The polypeptide is Putative glutamate--cysteine ligase 2-1 (Arthrobacter sp. (strain FB24)).